The following is a 171-amino-acid chain: NADP-reducing hydrogenase subunit HndA (171 aa).

Residues Cys-98, Cys-103, Cys-139, and Cys-143 each contribute to the [2Fe-2S] cluster site.

Belongs to the complex I 24 kDa subunit family. In terms of assembly, heterotetramer composed of HndA, HndB, HndC and HndD subunits. HndA and HndB could form a heterodimeric intermediate in the electron transfer between the active site of hydrogenase subunit HndD and the NADP reduction site of the reducing subunit HndC. The cofactor is [2Fe-2S] cluster.

It catalyses the reaction H2 + NADP(+) = NADPH + H(+). With respect to regulation, inhibited by oxygen. Catalyzes the reduction of NADP in the presence of molecular H(2) to yield NADPH. The chain is NADP-reducing hydrogenase subunit HndA (hndA) from Solidesulfovibrio fructosivorans (Desulfovibrio fructosivorans).